The chain runs to 422 residues: Biofilm regulator 1 (422 aa).

Composition is skewed to low complexity over residues 1–19 (MSSS…TTSA) and 36–45 (SGGSNNGNGS). Disordered regions lie at residues 1-86 (MSSS…KCPP) and 116-207 (RLSS…PSHP). A compositionally biased stretch (polar residues) spans 46 to 61 (ALKSQISPRLSDTSRI). Composition is skewed to low complexity over residues 69 to 81 (TSGS…SSTP) and 120 to 143 (PTLP…LSPV). A compositionally biased stretch (polar residues) spans 146 to 159 (VINTPPQQPQSVSA). The segment covering 160–194 (STSPNTQYQYYQYQQQSSPIQQQQQQQQATPAATP) has biased composition (low complexity). Over residues 195–205 (TVMQMAQNQPS) the composition is skewed to polar residues. A GATA-type zinc finger spans residues 282-307 (CHRCGTTETPEWRRGPKGVRTLCNAC).

As to quaternary structure, interacts with HDA1.

Its subcellular location is the nucleus. In terms of biological role, transcription factor required for hyphal growth, biofilm formation, and virulence. Promotes formation of both conventional and pheromone-stimulated biofilms. Binds and recruits HDA1 to promoters of hypha-specific genes in a rapamycin-dependent manner. Involved in the switch between two heritable states, the white and opaque states. These two cell types differ in many characteristics, including cell structure, mating competence, and virulence. Each state is heritable for many generations, and switching between states occurs stochastically at low frequency. In Candida albicans (strain SC5314 / ATCC MYA-2876) (Yeast), this protein is Biofilm regulator 1 (BRG1).